We begin with the raw amino-acid sequence, 237 residues long: Cytidylate kinase (237 aa).

15 to 23 is a binding site for ATP; sequence GPSGSGKGT.

This sequence belongs to the cytidylate kinase family. Type 1 subfamily.

The protein localises to the cytoplasm. The catalysed reaction is CMP + ATP = CDP + ADP. It catalyses the reaction dCMP + ATP = dCDP + ADP. The sequence is that of Cytidylate kinase from Coxiella burnetii (strain RSA 493 / Nine Mile phase I).